We begin with the raw amino-acid sequence, 109 residues long: Matrix protein 2 (109 aa).

The Virion surface portion of the chain corresponds to 1-4 (MLEP). The helical; Signal-anchor for type III membrane protein transmembrane segment at 5 to 27 (FQILSICSFILSALHFMAWTIGH) threads the bilayer. Topologically, residues 28–109 (LNQIKRGVNM…ETVLEIEELH (82 aa)) are intravirion. Residues 58–83 (HSYQKEIQAKETMKEVLSDNMEVLSD) adopt a coiled-coil conformation.

As to quaternary structure, homotetramer. In terms of processing, phosphorylated by host.

It is found in the virion membrane. It localises to the host cell membrane. Its function is as follows. Forms presumably a highly low-pH gated proton-selective channel. Trp-23 may function as a minimalistic gate that opens and closes the pore. When the environmental pH is lower than a threshold, the BM2 channel would be activated and selectively transport protons across the membrane from the extracellular side to the cytoplasmic side. Crucial for the uncoating process. When the virion is internalized into the endosome, the channel acidifies the virion's interior, promoting the dissociation of matrix protein 1 (M1) from the ribonucleoprotein (RNP) thus allowing the transport of the RNP from the virion into the cell's nucleus. Also plays a role in viral proteins secretory pathway. Elevates the intravesicular pH of normally acidic compartments, such as trans-Golgi network, preventing newly formed hemagglutinin from premature switching to the fusion-active conformation. Plays a crucial role in virion assembly. Expressed in the late phase of the infection. The protein is Matrix protein 2 (M) of Influenza B virus (strain B/Memphis/12/1997).